The following is an 85-amino-acid chain: ALVLLAFQVQADPIQNTDEETKTEEQPGEEDQAVSVSFGDPEGTSLQEESLRDLVCYCRSRGCKGRERMNGTCRKGHLLYMLCCR.

The first 11 residues, 1–11, serve as a signal peptide directing secretion; it reads ALVLLAFQVQA. The propeptide occupies 12–50; that stretch reads DPIQNTDEETKTEEQPGEEDQAVSVSFGDPEGTSLQEES. A disordered region spans residues 14–46; that stretch reads IQNTDEETKTEEQPGEEDQAVSVSFGDPEGTSL. 3 disulfide bridges follow: cysteine 56–cysteine 84, cysteine 58–cysteine 73, and cysteine 63–cysteine 83.

The protein belongs to the alpha-defensin family. In terms of tissue distribution, paneth cells of the small bowel.

The protein localises to the secreted. Its function is as follows. Probably contributes to the antimicrobial barrier function of the small bowel mucosa. This is Alpha-defensin 11 (Defa11) from Mus musculus (Mouse).